The primary structure comprises 501 residues: MSEQTQELDLNGEMLVRREKLAALRAKGNPFPNTFRRDALAQDLHANYDALEGEALKAQEVEVKVAGRIMTRRAMGKATFITLQDMSGRIQLYVARDNLPEGIYADDVGQWDLGDIIGVKGTLFKTKTNELTVRCTEVQLLTKALRPLPDKFHGLSDQETRYRQRYLDLIANEDSRRTFIIRSKVIAGIREYFLSKGFMEVETPMLQIIPGGASARPFVTHHNALDVDMYLRIAPELYLKRLVVGGFERVFELNRNFRNEGVSVRHNPEFTMLEYYQAYADYHDLMDNTEELLRKLAMDILGTTIVPYGELEFDFGKPFERITMHDAILKYGAEKGIVKEDLYDFDRAVAVAKKLGIEVQKSWGLGSLVNVIFEEVAEHHLIQPTFLMAHPAEISPLARRNDENPEVTDRFELFIGGREIGNGFSELNDAEDQNERFDAQVAAKEAGDDEAMFKDEDFVTALEHGLPPTAGEGLGIDRLAMLFANAASIRDVILFPAMKQK.

Glu412 and Glu419 together coordinate Mg(2+).

Belongs to the class-II aminoacyl-tRNA synthetase family. In terms of assembly, homodimer. Requires Mg(2+) as cofactor.

The protein resides in the cytoplasm. It carries out the reaction tRNA(Lys) + L-lysine + ATP = L-lysyl-tRNA(Lys) + AMP + diphosphate. The sequence is that of Lysine--tRNA ligase (lysS) from Pasteurella multocida (strain Pm70).